A 138-amino-acid chain; its full sequence is Gap junction alpha-4 protein (138 aa).

Residues 1 to 16 (DWGFLEKLLDQVQEHS) lie on the Cytoplasmic side of the membrane. Residues 17–39 (TVVGKIWLTVLFIFRILILGLAG) form a helical membrane-spanning segment. The Extracellular segment spans residues 40-74 (ESVWGDEQSDFECNTAQPGCTNVCYDQAFPISHIP). Residues 75–97 (YWVLQFLFVSTPTLVYLGHVIYL) traverse the membrane as a helical segment. Topologically, residues 98–138 (SRREERLRQKEGELRALPDKDPRVERALAGIERQMAKISVA) are cytoplasmic.

The protein belongs to the connexin family. Alpha-type (group II) subfamily. As to quaternary structure, a connexon is composed of a hexamer of connexins.

The protein localises to the cell membrane. Its subcellular location is the cell junction. The protein resides in the gap junction. Its function is as follows. One gap junction consists of a cluster of closely packed pairs of transmembrane channels, the connexons, through which materials of low MW diffuse from one cell to a neighboring cell. The chain is Gap junction alpha-4 protein (GJA4) from Sus scrofa (Pig).